The primary structure comprises 96 residues: Small ribosomal subunit protein bS20 (96 aa).

This sequence belongs to the bacterial ribosomal protein bS20 family.

Functionally, binds directly to 16S ribosomal RNA. The chain is Small ribosomal subunit protein bS20 from Anaplasma marginale (strain St. Maries).